Reading from the N-terminus, the 393-residue chain is Methylthioribose kinase (393 aa).

ATP-binding positions include asparagine 38, lysine 53, and 107 to 109 (EDL). A substrate-binding site is contributed by aspartate 225. 242–244 (DPE) is a binding site for ATP. A substrate-binding site is contributed by arginine 332.

Belongs to the methylthioribose kinase family. As to quaternary structure, homodimer.

It carries out the reaction 5-(methylsulfanyl)-D-ribose + ATP = 5-(methylsulfanyl)-alpha-D-ribose 1-phosphate + ADP + H(+). The protein operates within amino-acid biosynthesis; L-methionine biosynthesis via salvage pathway; S-methyl-5-thio-alpha-D-ribose 1-phosphate from S-methyl-5'-thioadenosine (hydrolase route): step 2/2. Catalyzes the phosphorylation of methylthioribose into methylthioribose-1-phosphate. The polypeptide is Methylthioribose kinase (Bacillus cereus (strain AH820)).